The sequence spans 391 residues: Ferrochelatase (391 aa).

Residues His196 and Glu281 each coordinate Fe cation.

This sequence belongs to the ferrochelatase family.

The protein resides in the cytoplasm. The enzyme catalyses heme b + 2 H(+) = protoporphyrin IX + Fe(2+). It participates in porphyrin-containing compound metabolism; protoheme biosynthesis; protoheme from protoporphyrin-IX: step 1/1. Functionally, catalyzes the ferrous insertion into protoporphyrin IX. This Synechococcus sp. (strain CC9605) protein is Ferrochelatase.